The following is a 791-amino-acid chain: Diacylglycerol kinase gamma (791 aa).

Disordered regions lie at residues 82–103 (KPRHETSDHPTEGASNSEANSA) and 117–154 (DEACAPDTESNMAEKQAPAEDQVAATPLEPPVPRSSSS). The span at 83–92 (PRHETSDHPT) shows a compositional bias: basic and acidic residues. Positions 94–103 (GASNSEANSA) are enriched in polar residues. EF-hand domains lie at 175–210 (RPQDKLEFMFRLYDSDENGLLDQAEMDCIVNQMLHI) and 220–255 (ELRPILKEMLQGMDYDRDGFVSLQEWVHGGMTTIPL). Residues Asp188, Asp190, Asn192, Glu199, Asp233, Asp235, Asp237, and Glu244 each coordinate Ca(2+). Phorbol-ester/DAG-type zinc fingers lie at residues 271-321 (RHAW…IPGC) and 336-385 (QHAW…LCDG). The DAGKc domain occupies 430–564 (PGTHPLLVLV…LDRWHLEVIP (135 aa)). Positions 768–791 (APMMMGPPQKSSFFSLRRKSRSKD) are disordered.

It belongs to the eukaryotic diacylglycerol kinase family. As to expression, predominantly expressed in retina and in a much lesser extent in the brain. Other tissues contain extremely low levels of DGK-gamma.

The protein resides in the membrane. It is found in the cytoplasm. The protein localises to the cytosol. It localises to the cytoskeleton. It carries out the reaction a 1,2-diacyl-sn-glycerol + ATP = a 1,2-diacyl-sn-glycero-3-phosphate + ADP + H(+). The catalysed reaction is 1,2-didecanoyl-sn-glycerol + ATP = 1,2-didecanoyl-sn-glycero-3-phosphate + ADP + H(+). The enzyme catalyses 1-octadecanoyl-2-(5Z,8Z,11Z,14Z-eicosatetraenoyl)-sn-glycerol + ATP = 1-octadecanoyl-2-(5Z,8Z,11Z,14Z-eicosatetraenoyl)-sn-glycero-3-phosphate + ADP + H(+). It catalyses the reaction 1,2-di-(9Z-octadecenoyl)-sn-glycerol + ATP = 1,2-di-(9Z-octadecenoyl)-sn-glycero-3-phosphate + ADP + H(+). It carries out the reaction 1-octadecanoyl-2-(9Z,12Z)-octadecadienoyl-sn-glycerol + ATP = 1-octadecanoyl-2-(9Z,12Z-octadecadienoyl)-sn-glycero-3-phosphate + ADP + H(+). It functions in the pathway lipid metabolism; glycerolipid metabolism. With respect to regulation, the activity is calcium-dependent. Requires phosphatidylserine for maximal activity. In terms of biological role, diacylglycerol kinase that converts diacylglycerol/DAG into phosphatidic acid/phosphatidate/PA and regulates the respective levels of these two bioactive lipids. Thereby, acts as a central switch between the signaling pathways activated by these second messengers with different cellular targets and opposite effects in numerous biological processes. Has no apparent specificity with regard to the acyl compositions of diacylglycerol. Specifically expressed in the cerebellum where it controls the level of diacylglycerol which in turn regulates the activity of protein kinase C gamma. Through protein kinase C gamma, indirectly regulates the dendritic development of Purkinje cells, cerebellar long term depression and ultimately cerebellar motor coordination. The chain is Diacylglycerol kinase gamma (DGKG) from Homo sapiens (Human).